Reading from the N-terminus, the 114-residue chain is Large ribosomal subunit protein bL19 (114 aa).

This sequence belongs to the bacterial ribosomal protein bL19 family.

This protein is located at the 30S-50S ribosomal subunit interface and may play a role in the structure and function of the aminoacyl-tRNA binding site. The chain is Large ribosomal subunit protein bL19 (rplS) from Listeria innocua serovar 6a (strain ATCC BAA-680 / CLIP 11262).